A 66-amino-acid polypeptide reads, in one-letter code: Neurotoxin-like protein STR1 (66 aa).

Residues Arg-2–Trp-65 enclose the LCN-type CS-alpha/beta domain. Cystine bridges form between Cys-13–Cys-64, Cys-17–Cys-40, Cys-26–Cys-45, and Cys-30–Cys-47.

The protein belongs to the long (4 C-C) scorpion toxin superfamily. Sodium channel inhibitor family. Beta subfamily. Expressed by the venom gland.

The protein localises to the secreted. This protein is not toxic. The polypeptide is Neurotoxin-like protein STR1 (Androctonus australis (Sahara scorpion)).